Consider the following 122-residue polypeptide: Large ribosomal subunit protein uL14 (122 aa).

It belongs to the universal ribosomal protein uL14 family. Part of the 50S ribosomal subunit. Forms a cluster with proteins L3 and L19. In the 70S ribosome, L14 and L19 interact and together make contacts with the 16S rRNA in bridges B5 and B8.

Functionally, binds to 23S rRNA. Forms part of two intersubunit bridges in the 70S ribosome. The sequence is that of Large ribosomal subunit protein uL14 from Rhodococcus jostii (strain RHA1).